The following is a 438-amino-acid chain: NADH-quinone oxidoreductase subunit D (438 aa).

It belongs to the complex I 49 kDa subunit family. As to quaternary structure, NDH-1 is composed of 14 different subunits. Subunits NuoB, C, D, E, F, and G constitute the peripheral sector of the complex.

Its subcellular location is the cell membrane. The enzyme catalyses a quinone + NADH + 5 H(+)(in) = a quinol + NAD(+) + 4 H(+)(out). Functionally, NDH-1 shuttles electrons from NADH, via FMN and iron-sulfur (Fe-S) centers, to quinones in the respiratory chain. The immediate electron acceptor for the enzyme in this species is believed to be a menaquinone. Couples the redox reaction to proton translocation (for every two electrons transferred, four hydrogen ions are translocated across the cytoplasmic membrane), and thus conserves the redox energy in a proton gradient. The sequence is that of NADH-quinone oxidoreductase subunit D from Rhodococcus jostii (strain RHA1).